The sequence spans 225 residues: MKQSGGTEAQKRRAGKQAADAVEDGMVVGLGTGSTAAASIRELGQRVEEGLDIRGIPTSYQSRQLAREADIPLTTLEEATPDVAIDGADQVAAGDLIKGGGAAHAREKLVDAAADRFLVVADETKLSPTLDIPVPVEVLPDAAPVVQRQVAALGGEPTLRAAERKDGPVVTDNGNLVIDCAFGEIAEPAALAEELSALPGAVEHGLFVGLADEILVGTDDGVDVR.

The tract at residues 1–20 (MKQSGGTEAQKRRAGKQAAD) is disordered. Substrate-binding positions include 32 to 35 (TGST), 86 to 89 (DGAD), and 98 to 101 (KGGG). The active-site Proton acceptor is glutamate 107. Residue lysine 125 coordinates substrate.

It belongs to the ribose 5-phosphate isomerase family. As to quaternary structure, homodimer.

It carries out the reaction aldehydo-D-ribose 5-phosphate = D-ribulose 5-phosphate. Its pathway is carbohydrate degradation; pentose phosphate pathway; D-ribose 5-phosphate from D-ribulose 5-phosphate (non-oxidative stage): step 1/1. Functionally, catalyzes the reversible conversion of ribose-5-phosphate to ribulose 5-phosphate. In Natronomonas pharaonis (strain ATCC 35678 / DSM 2160 / CIP 103997 / JCM 8858 / NBRC 14720 / NCIMB 2260 / Gabara) (Halobacterium pharaonis), this protein is Ribose-5-phosphate isomerase A.